The following is a 191-amino-acid chain: Protein RER1A (191 aa).

N-acetylmethionine is present on methionine 1. The next 4 helical transmembrane spans lie at 39-57 (YRWIGTLVVALIYCLRVYY), 60-80 (GFYIIAYGLGIYLLNLLIGFL), 115-135 (FKFWYSMTKAFCIAFLMTFFS), and 136-156 (VFDVPVFWPILLCYWIVLFVL).

Belongs to the RER1 family.

It localises to the membrane. In terms of biological role, involved in the retrieval of endoplasmic reticulum membrane proteins from the early Golgi compartment. This Arabidopsis thaliana (Mouse-ear cress) protein is Protein RER1A (RER1A).